The chain runs to 355 residues: tRNA uridine(34) hydroxylase (355 aa).

In terms of domain architecture, Rhodanese spans aspartate 146–leucine 240. Cysteine 200 (cysteine persulfide intermediate) is an active-site residue.

Belongs to the TrhO family.

It catalyses the reaction uridine(34) in tRNA + AH2 + O2 = 5-hydroxyuridine(34) in tRNA + A + H2O. Functionally, catalyzes oxygen-dependent 5-hydroxyuridine (ho5U) modification at position 34 in tRNAs. The chain is tRNA uridine(34) hydroxylase from Pectobacterium atrosepticum (strain SCRI 1043 / ATCC BAA-672) (Erwinia carotovora subsp. atroseptica).